The chain runs to 788 residues: Integrin beta-6 (788 aa).

An N-terminal signal peptide occupies residues 1–21 (MGIELLCFFFLFLGRDDHVRG). The 50-residue stretch at 22-71 (GCAMEGAETCGDCLLIGPQCAWCSQENFTHPSGVSERCDTPANLLAKGCQ) folds into the PSI domain. Residues 22 to 709 (GCAMEGAETC…KDCPKPPNIP (688 aa)) lie on the Extracellular side of the membrane. Disulfide bonds link C23–C41, C31–C454, C34–C59, C44–C70, C197–C204, C252–C293, C394–C406, C426–C452, C456–C476, C467–C479, C481–C490, C492–C519, C502–C517, C511–C522, C524–C537, C539–C560, C544–C558, C552–C563, and C565–C574. N-linked (GlcNAc...) asparagine glycans are attached at residues N48 and N97. Residues 131–371 (YPVDLYYLMD…QLIISAYEEL (241 aa)) form the VWFA domain. D140, S142, and S144 together coordinate Mg(2+). Residues S144, D147, D148, and E179 each coordinate Ca(2+). 4 residues coordinate Ca(2+): N235, D237, P239, and E240. E240 is a Mg(2+) binding site. N260 carries N-linked (GlcNAc...) asparagine glycosylation. Ca(2+) contacts are provided by D271 and K355. N-linked (GlcNAc...) asparagine glycans are attached at residues N387, N396, and N418. I-EGF domains lie at 456–491 (CQKEVEVNSSKCHNGNGSYQCGVCACNPGHMGPHCE), 492–538 (CGED…PYCQ), 539–575 (CDNFSCVRHKGLLCGDNGDCECGECVCRSGWTGEYCN), and 576–615 (CTTSTDTCISEDGTLCSGRGDCVCGKCVCTNPGASGPTCE). N-linked (GlcNAc...) asparagine glycosylation is found at N463 and N471. Residue N541 is glycosylated (N-linked (GlcNAc...) asparagine). N575 is a glycosylation site (N-linked (GlcNAc...) asparagine). 9 disulfide bridges follow: C576–C599, C583–C597, C591–C602, C604–C614, C617–C620, C624–C670, C630–C649, C633–C645, and C678–C702. N-linked (GlcNAc...) asparagine glycosylation occurs at N696. Residues 710 to 730 (MIMLGVSLAILLIGVVLLCIW) form a helical membrane-spanning segment. Residues 731–758 (KLLVSFHDRKEVAKFEAERSKAKWQTGT) form an interaction with HAX1 region. At 731 to 788 (KLLVSFHDRKEVAKFEAERSKAKWQTGTNPLYRGSTSTFKNVTYKHRDKLKTDLSTDG) the chain is on the cytoplasmic side.

The protein belongs to the integrin beta chain family. As to quaternary structure, heterodimer of an alpha and a beta subunit. Interacts with FLNB. Interacts with HAX1. ITGAV:ITGB6 interacts with FBN1. ITGAV:ITGB6 interacts with TGFB1.

It is found in the cell membrane. The protein localises to the cell junction. The protein resides in the focal adhesion. In terms of biological role, integrin alpha-V:beta-6 (ITGAV:ITGB6) is a receptor for fibronectin and cytotactin. It recognizes the sequence R-G-D in its ligands. ITGAV:ITGB6 acts as a receptor for fibrillin-1 (FBN1) and mediates R-G-D-dependent cell adhesion to FBN1. Integrin alpha-V:beta-6 (ITGAV:ITGB6) mediates R-G-D-dependent release of transforming growth factor beta-1 (TGF-beta-1) from regulatory Latency-associated peptide (LAP), thereby playing a key role in TGF-beta-1 activation. The polypeptide is Integrin beta-6 (ITGB6) (Cavia porcellus (Guinea pig)).